Here is a 307-residue protein sequence, read N- to C-terminus: Protoheme IX farnesyltransferase (307 aa).

8 helical membrane-spanning segments follow: residues 32-52, 65-85, 108-128, 131-151, 158-178, 186-206, 251-271, and 287-307; these read MGIV…ALHF, FFTI…NNYI, PGFA…FLLL, PMAV…YSLW, LNTV…WAAI, IAWM…LALA, LGIT…VLGF, and FVYS…VTFF.

It belongs to the UbiA prenyltransferase family. Protoheme IX farnesyltransferase subfamily. In terms of assembly, interacts with CtaA.

The protein resides in the cell membrane. It carries out the reaction heme b + (2E,6E)-farnesyl diphosphate + H2O = Fe(II)-heme o + diphosphate. It participates in porphyrin-containing compound metabolism; heme O biosynthesis; heme O from protoheme: step 1/1. In terms of biological role, converts heme B (protoheme IX) to heme O by substitution of the vinyl group on carbon 2 of heme B porphyrin ring with a hydroxyethyl farnesyl side group. The protein is Protoheme IX farnesyltransferase of Bacillus anthracis (strain A0248).